Consider the following 262-residue polypeptide: Tetrahydromethanopterin S-methyltransferase subunit C (262 aa).

Transmembrane regions (helical) follow at residues 35–57, 70–92, 97–119, 140–162, 172–194, and 214–236; these read FVPS…AGAN, GVPS…GVLI, GLPV…FIVG, LSLM…FSAD, GVIA…ACIG, and WLIF…FWLY.

It belongs to the MtrC family. The complex is composed of 8 subunits; MtrA, MtrB, MtrC, MtrD, MtrE, MtrF, MtrG and MtrH.

It is found in the cell membrane. The enzyme catalyses 5-methyl-5,6,7,8-tetrahydromethanopterin + coenzyme M + 2 Na(+)(in) = 5,6,7,8-tetrahydromethanopterin + methyl-coenzyme M + 2 Na(+)(out). It participates in one-carbon metabolism; methanogenesis from CO(2); methyl-coenzyme M from 5,10-methylene-5,6,7,8-tetrahydromethanopterin: step 2/2. Functionally, part of a complex that catalyzes the formation of methyl-coenzyme M and tetrahydromethanopterin from coenzyme M and methyl-tetrahydromethanopterin. This is an energy-conserving, sodium-ion translocating step. This is Tetrahydromethanopterin S-methyltransferase subunit C from Methanococcus maripaludis (strain DSM 14266 / JCM 13030 / NBRC 101832 / S2 / LL).